Here is a 463-residue protein sequence, read N- to C-terminus: Female germline-specific tumor suppressor gld-1 (463 aa).

Positions 1–10 are enriched in polar residues; it reads MPSCTTPTYG. A disordered region spans residues 1 to 76; it reads MPSCTTPTYG…RAPPPARLTL (76 aa). Positions 11–31 are enriched in low complexity; it reads VSTQLESQSSESPSRSSVMTP. The qua1 domain; involved in homodimerization stretch occupies residues 135–205; that stretch reads PTATEPIEVE…PEPAGDMISI (71 aa). Positions 208-260 constitute a KH domain; the sequence is KIYVPKNEYPDYNFVGRILGPRGMTAKQLEQDTGCKIMVRGKGSMRDKSKESA. The interval 305–336 is qua2 domain; involved in RNA binding; sequence APEGTDELKRKQLMELAIINGTYRPMKSPNPA. The interval 443 to 463 is disordered; it reads NTNVSPSGASPSASSVNNTSF. Residues 447–457 are compositionally biased toward low complexity; that stretch reads SPSGASPSASS.

As to quaternary structure, homodimer. Phosphorylated by cdk-2 which may negatively regulate its expression in distal mitotic germline cells. Post-translationally, undergoes proteasomal degradation in proximal oocytes following mating. In terms of tissue distribution, expressed in proximal and distal oocytes in female worms but is eliminated from proximal oocytes following mating.

Functionally, RNA-binding protein which recognizes the 5'-UACUCAU-3' RNA consensus sequence. Binds sequences in both the 5'coding and the 3'-UTR region of rme-2 mRNA. Binds sequences in the 3'-UTR region of cye-1 mRNA. Binds to cyb-2.1, cyb-2.2 and cyb-3 mRNA. Binds sequences in the 3'-UTR region of tra-2 mRNA. Binds to the 3' UTR of Notch receptor homolog glp-1, thereby repressing glp-1 translation in the embryo. Binding to the glp-1 3' UTR is inhibited by pos-1 binding to an overlapping binding site in the glp-1 3' UTR. Germ line-specific tumor suppressor essential for oogenesis. Controls the spatial pattern of translation of multiple oogenesis specific mRNAs (e.g. yolk receptor rme-2) by repression of translation during early meiotic prophase (leptotene to pachytene) and then derepression of translation during diplotene/ diakinesis, following its degradation. Also functions to promote the male sexual fate in the hermaphrodite germline but not the male germline. Represses translation of the vacuolar ATPase component vha-13 in the distal gonad. Functions redundantly with gld-2 to promote the initiation of meiotic development and/or inhibit stem cell proliferation. By regulating cye-1 expression, prevents entry into mitosis in meiotic germline cells. The chain is Female germline-specific tumor suppressor gld-1 (gld-1) from Caenorhabditis elegans.